A 573-amino-acid chain; its full sequence is MVQHELAAEIARQILLGFDDYREHFRLITEGARARFEQAQWQEAQRASAARISLYEEKVGETRRRLLASFDHADLLQVEAWPQIKSAYIELINPRFDDELSETWYNSIFCGLFSHDCISDGTMFIHTTRPAVRAHERLAQTRRYRPNGDLRGMLEQILRDYAFSVPYCDLPGDLQRLQTQLCETLPDWVCKDPELTVEVFVSVLYRNKGAYLIGRIFTCDEQWPLAIPLLHRDGQGIVADALITDEAEVSIIFSFTRSYFMVEVPIPAEFVGFLKRILPGKHIAELYSSIGFYKHGKSEFYRALIDHLANTDDRFVMAPGVRGMVMTVFTLPGFNTVFKLIKDRFSPIKSVNRANVIEKYRLVKSVDRVGRMADTQEFADFRFPKAKFEPECLAELLEVAPSTVEVQGDTVLVRHCWTERRMTPLNLYLENASEQQVREALEDYGLAIKQLAAANIFPGDMLLKNFGVTRHGRVVFYDYDEISFLTEVNFRHIPPPRYPEDEMASEPWYSVGPNDVFPEEFPRFLFADLGQRRLFASLHGELYDADYWKGLQDAIRQGKVIDVFPYRRKADRN.

ATP contacts are provided by residues 318–324 and K339; that span reads APGVRGM. D374 is a catalytic residue.

The protein belongs to the AceK family.

The protein resides in the cytoplasm. The enzyme catalyses L-seryl-[isocitrate dehydrogenase] + ATP = O-phospho-L-seryl-[isocitrate dehydrogenase] + ADP + H(+). Bifunctional enzyme which can phosphorylate or dephosphorylate isocitrate dehydrogenase (IDH) on a specific serine residue. This is a regulatory mechanism which enables bacteria to bypass the Krebs cycle via the glyoxylate shunt in response to the source of carbon. When bacteria are grown on glucose, IDH is fully active and unphosphorylated, but when grown on acetate or ethanol, the activity of IDH declines drastically concomitant with its phosphorylation. This is Isocitrate dehydrogenase kinase/phosphatase from Stutzerimonas stutzeri (strain A1501) (Pseudomonas stutzeri).